Here is a 436-residue protein sequence, read N- to C-terminus: MAVTVETLEKLERKITLSLPLNSIQSEVENRLKQVARTVKMDGFRPGKVPMSVVAQRYGYSVQYEVLNDKVGEAFAQAVNEAKLRVAGQPRISEKEGAPEGEAQFEAIFEVMPEVKIGDLTSAEVEKLTAEVDDAAIDKTVDILRKQRRTFAQRAQADVAVDGDRVTVDFEGKIDGETFSGGKAEDFQFLVGEGQMLKEFEDAVRGMKAGESKTFPLAFPADYHGKDVAGKTADFLVTVKKIEAANLPEVDEAFAKALGVAEGTVEGLRADIKKNLEREVKFRVQGRNKQAVMDALVSKAELELPKASVQAEVARLLEGARAELQQRGIKDAEKAEIPEDVFLPQAERRVRLGLVVAELVRANELHATPDQIKAHVEELAASYEKPEDVARWYFGDRQRLAEVEAVVIENNVTEFVLGKAKVSDKAVSFDELMGQA.

Residues 163 to 248 (GDRVTVDFEG…VKKIEAANLP (86 aa)) enclose the PPIase FKBP-type domain.

It belongs to the FKBP-type PPIase family. Tig subfamily.

It is found in the cytoplasm. The catalysed reaction is [protein]-peptidylproline (omega=180) = [protein]-peptidylproline (omega=0). In terms of biological role, involved in protein export. Acts as a chaperone by maintaining the newly synthesized protein in an open conformation. Functions as a peptidyl-prolyl cis-trans isomerase. The protein is Trigger factor of Delftia acidovorans (strain DSM 14801 / SPH-1).